The chain runs to 246 residues: Bis(5'-nucleosyl)-tetraphosphatase PrpE [asymmetrical] (246 aa).

This sequence belongs to the PrpE family. Ni(2+) serves as cofactor.

It carries out the reaction P(1),P(4)-bis(5'-guanosyl) tetraphosphate + H2O = GMP + GTP + 2 H(+). Its function is as follows. Asymmetrically hydrolyzes Ap4p to yield AMP and ATP. This Bacillus cereus (strain AH187) protein is Bis(5'-nucleosyl)-tetraphosphatase PrpE [asymmetrical].